The primary structure comprises 394 residues: Protein arginine N-methyltransferase 8 (394 aa).

Residue glycine 2 is the site of N-myristoyl glycine attachment. The segment at 16 to 40 (MAENAAESTEVNSPPSQPPQPVVPA) is disordered. 2 consecutive short sequence motifs (SH3-binding) follow at residues 29–42 (PPSQ…PAKP) and 53–58 (PSCPGR). Over residues 30–39 (PSQPPQPVVP) the composition is skewed to pro residues. Arginine 58 carries the omega-N-methylarginine; by autocatalysis modification. An Asymmetric dimethylarginine; by autocatalysis modification is found at arginine 73. Residues 73–394 (RDYYFDSYAH…TSVSNDYKMR (322 aa)) form the SAM-dependent MTase PRMT-type domain. S-adenosyl-L-methionine contacts are provided by residues histidine 86, arginine 95, glycine 119, 119–122 (GSGT), glutamate 141, and glutamate 170. Catalysis depends on residues glutamate 185 and glutamate 194.

It belongs to the class I-like SAM-binding methyltransferase superfamily. Protein arginine N-methyltransferase family. PRMT8 subfamily. Homodimer. Tetramer; individual homodimers associates to form a homotetramer. Homooctamer; individual homodimers associates to form a homooctamer and homooligomerization is required for proper localization to the cell membrane. Heterodimer with PRMT1; heterodimerization may recruit PRMT1 activity to the plasma membrane. Interacts with PRMT2 (via the SH3 domain). Interacts with FYN (via the SH3 domain). Interacts with EWS; independently of EWS methylation status. As to expression, brain-specific.

The protein resides in the cell membrane. It carries out the reaction L-arginyl-[protein] + S-adenosyl-L-methionine = N(omega)-methyl-L-arginyl-[protein] + S-adenosyl-L-homocysteine + H(+). The enzyme catalyses L-arginyl-[protein] + 2 S-adenosyl-L-methionine = N(omega),N(omega)-dimethyl-L-arginyl-[protein] + 2 S-adenosyl-L-homocysteine + 2 H(+). Functionally, S-adenosyl-L-methionine-dependent and membrane-associated arginine methyltransferase that can both catalyze the formation of omega-N monomethylarginine (MMA) and asymmetrical dimethylarginine (aDMA) in proteins such as NIFK, myelin basic protein, histone H4, H2A and H2A/H2B dimer. Able to mono- and dimethylate EWS protein; however its precise role toward EWS remains unclear as it still interacts with fully methylated EWS. This is Protein arginine N-methyltransferase 8 from Homo sapiens (Human).